Here is a 163-residue protein sequence, read N- to C-terminus: Large ribosomal subunit protein uL10 (163 aa).

The protein belongs to the universal ribosomal protein uL10 family. Part of the ribosomal stalk of the 50S ribosomal subunit. The N-terminus interacts with L11 and the large rRNA to form the base of the stalk. The C-terminus forms an elongated spine to which L12 dimers bind in a sequential fashion forming a multimeric L10(L12)X complex.

Forms part of the ribosomal stalk, playing a central role in the interaction of the ribosome with GTP-bound translation factors. The polypeptide is Large ribosomal subunit protein uL10 (rplJ) (Haemophilus influenzae (strain ATCC 51907 / DSM 11121 / KW20 / Rd)).